The following is a 354-amino-acid chain: Probable L-ascorbate-6-phosphate lactonase UlaG (354 aa).

It belongs to the UlaG family. The cofactor is a divalent metal cation.

Its subcellular location is the cytoplasm. The enzyme catalyses L-ascorbate 6-phosphate + H2O = 3-dehydro-L-gulonate 6-phosphate. It participates in cofactor degradation; L-ascorbate degradation; D-xylulose 5-phosphate from L-ascorbate: step 1/4. Probably catalyzes the hydrolysis of L-ascorbate-6-P into 3-keto-L-gulonate-6-P. Is essential for L-ascorbate utilization under anaerobic conditions. This is Probable L-ascorbate-6-phosphate lactonase UlaG from Escherichia coli O139:H28 (strain E24377A / ETEC).